The chain runs to 348 residues: Putative [LysW]-L-2-aminoadipate/[LysW]-L-glutamate phosphate reductase (348 aa).

9-12 serves as a coordination point for NADP(+); the sequence is SGYV. C149 is an active-site residue. NADP(+) is bound at residue N315.

It belongs to the NAGSA dehydrogenase family. Type 1 subfamily. LysY sub-subfamily.

The protein resides in the cytoplasm. It catalyses the reaction [amino-group carrier protein]-C-terminal-N-(1-carboxy-5-oxopentan-1-yl)-L-glutamine + phosphate + NADP(+) = [amino-group carrier protein]-C-terminal-N-(1-carboxy-5-phosphooxy-5-oxopentan-1-yl)-L-glutamine + NADPH + H(+). The catalysed reaction is [amino-group carrier protein]-C-terminal-gamma-(L-glutamyl-5-semialdehyde)-L-glutamate + phosphate + NADP(+) = [amino-group carrier protein]-C-terminal-gamma-(5-phospho-L-glutamyl)-L-glutamate + NADPH + H(+). It participates in amino-acid biosynthesis; L-lysine biosynthesis via AAA pathway; L-lysine from L-alpha-aminoadipate (Thermus route): step 3/5. It functions in the pathway amino-acid biosynthesis; L-arginine biosynthesis. Involved in both the arginine and lysine biosynthetic pathways. The protein is Putative [LysW]-L-2-aminoadipate/[LysW]-L-glutamate phosphate reductase of Nitrosopumilus maritimus (strain SCM1).